We begin with the raw amino-acid sequence, 530 residues long: Histone-arginine methyltransferase CARMER (530 aa).

An SAM-dependent MTase PRMT-type domain is found at 141–450 (ASQYFQFYGY…QSYDVTIDLH (310 aa)). Residues Gln-154, Arg-163, Gly-187, Glu-209, Glu-238, and Thr-266 each coordinate S-adenosyl-L-methionine. Residue Arg-501 is modified to Asymmetric dimethylarginine; by autocatalysis.

It belongs to the class I-like SAM-binding methyltransferase superfamily. Protein arginine N-methyltransferase family. As to quaternary structure, homodimer. In terms of processing, the dimethylated protein is the major form.

It localises to the cytoplasm. It is found in the nucleus. It catalyses the reaction L-arginyl-[protein] + 2 S-adenosyl-L-methionine = N(omega),N(omega)-dimethyl-L-arginyl-[protein] + 2 S-adenosyl-L-homocysteine + 2 H(+). Its function is as follows. Methylates (mono- and asymmetric dimethylation) the guanidino nitrogens of arginyl residues in proteins. May methylate histone H3 at 'Arg-17' and activate transcription via chromatin remodeling. This Drosophila erecta (Fruit fly) protein is Histone-arginine methyltransferase CARMER (Art4).